Here is a 213-residue protein sequence, read N- to C-terminus: Adenylate kinase (213 aa).

10–15 contacts ATP; sequence GSGKGT. Positions 30–59 are NMP; it reads SVGDLLRNIISSSSELGKKIKGTVESGNLI. AMP-binding positions include Arg36, 57–59, 83–86, and Gln90; these read NLI and GFPR. Residues 125 to 160 are LID; the sequence is NRLACLDCKNIYSVSSFKSTTCAKCKSTRLEKRIDD. Arg126 is an ATP binding site. The Zn(2+) site is built by Cys129 and Cys132. 135-136 contacts ATP; the sequence is IY. Zn(2+)-binding residues include Cys146 and Cys149. Residues Arg157 and Arg169 each contribute to the AMP site. Leu195 provides a ligand contact to ATP.

It belongs to the adenylate kinase family. As to quaternary structure, monomer.

The protein resides in the cytoplasm. The enzyme catalyses AMP + ATP = 2 ADP. The protein operates within purine metabolism; AMP biosynthesis via salvage pathway; AMP from ADP: step 1/1. Functionally, catalyzes the reversible transfer of the terminal phosphate group between ATP and AMP. Plays an important role in cellular energy homeostasis and in adenine nucleotide metabolism. The chain is Adenylate kinase from Wolbachia pipientis wMel.